The sequence spans 147 residues: Large ribosomal subunit protein uL13 (147 aa).

It belongs to the universal ribosomal protein uL13 family. In terms of assembly, part of the 50S ribosomal subunit.

Its function is as follows. This protein is one of the early assembly proteins of the 50S ribosomal subunit, although it is not seen to bind rRNA by itself. It is important during the early stages of 50S assembly. This Rhodococcus jostii (strain RHA1) protein is Large ribosomal subunit protein uL13.